The sequence spans 323 residues: Peroxisomal and mitochondrial division factor 2 (323 aa).

3 disordered regions span residues 1-55 (MAEE…NDAI), 73-92 (ESKA…KSDE), and 120-143 (TART…SQKG). Residues 1 to 297 (MAEERSLNGE…WSPNVTAVGS (297 aa)) lie on the Cytoplasmic side of the membrane. Residues 13–26 (GQDDESFFDSDQQG) are compositionally biased toward acidic residues. Residues 28–278 (DGKSTELNQK…INGLKNVVEE (251 aa)) are a coiled coil. A helical membrane pass occupies residues 298–318 (GGAVAAVAVAVAGAAVVCYIY). Topologically, residues 319-323 (HSRRV) are mitochondrial intermembrane.

In terms of assembly, homodimer. Interacts with PMD1.

It is found in the mitochondrion outer membrane. Involved in morphogenesis and proliferation of mitochondria. Does not act redundantly with PMD1. Is not involved in peroxisomal proliferation. The chain is Peroxisomal and mitochondrial division factor 2 from Arabidopsis thaliana (Mouse-ear cress).